The sequence spans 247 residues: Ferredoxin:CoB-CoM heterodisulfide reductase subunit C (247 aa).

Positions Thr32–Arg62 constitute a 4Fe-4S ferredoxin-type domain. The [4Fe-4S] cluster site is built by Cys41, Cys44, Cys47, Cys51, Cys84, Cys87, Cys90, and Cys94. Residues Arg216 to Thr240 show a composition bias toward basic and acidic residues. The disordered stretch occupies residues Arg216–Val247.

Belongs to the HdrC family. In terms of assembly, the ferredoxin:CoB-CoM heterodisulfide reductase is composed of three subunits; HdrA1, HdrB1 and HdrC1. It depends on [4Fe-4S] cluster as a cofactor.

The protein localises to the cytoplasm. It catalyses the reaction coenzyme B + coenzyme M + 2 oxidized [2Fe-2S]-[ferredoxin] = coenzyme M-coenzyme B heterodisulfide + 2 reduced [2Fe-2S]-[ferredoxin] + 2 H(+). Its pathway is cofactor metabolism; coenzyme M-coenzyme B heterodisulfide reduction; coenzyme B and coenzyme M from coenzyme M-coenzyme B heterodisulfide: step 1/1. In terms of biological role, part of a complex that catalyzes the reversible reduction of CoM-S-S-CoB to the thiol-coenzymes H-S-CoM (coenzyme M) and H-S-CoB (coenzyme B). Probably involved in methylotrophic methanogenesis but not in aceticlastic methanogenesis. This Methanosarcina acetivorans (strain ATCC 35395 / DSM 2834 / JCM 12185 / C2A) protein is Ferredoxin:CoB-CoM heterodisulfide reductase subunit C.